The primary structure comprises 226 residues: Endonuclease NucS (226 aa).

This sequence belongs to the NucS endonuclease family.

It is found in the cytoplasm. In terms of biological role, cleaves both 3' and 5' ssDNA extremities of branched DNA structures. The protein is Endonuclease NucS of Mycobacterium ulcerans (strain Agy99).